A 570-amino-acid chain; its full sequence is Urease subunit alpha 1 (570 aa).

The Urease domain maps to 131-570 (GGIDTHVHFI…VPMAQRYFLF (440 aa)). The Ni(2+) site is built by His-136, His-138, and Lys-219. Position 219 is an N6-carboxylysine (Lys-219). His-221 is a binding site for substrate. His-248 and His-274 together coordinate Ni(2+). His-322 functions as the Proton donor in the catalytic mechanism. Asp-362 is a Ni(2+) binding site.

This sequence belongs to the metallo-dependent hydrolases superfamily. Urease alpha subunit family. As to quaternary structure, heterotrimer of UreA (gamma), UreB (beta) and UreC (alpha) subunits. Three heterotrimers associate to form the active enzyme. Ni cation serves as cofactor. In terms of processing, carboxylation allows a single lysine to coordinate two nickel ions.

It is found in the cytoplasm. The enzyme catalyses urea + 2 H2O + H(+) = hydrogencarbonate + 2 NH4(+). Its pathway is nitrogen metabolism; urea degradation; CO(2) and NH(3) from urea (urease route): step 1/1. In Brucella melitensis biotype 1 (strain ATCC 23456 / CCUG 17765 / NCTC 10094 / 16M), this protein is Urease subunit alpha 1.